The primary structure comprises 397 residues: Transaldolase (397 aa).

The active-site Schiff-base intermediate with substrate is the K136.

Belongs to the transaldolase family. Type 1 subfamily. As to quaternary structure, homodimer.

The protein resides in the cytoplasm. The enzyme catalyses D-sedoheptulose 7-phosphate + D-glyceraldehyde 3-phosphate = D-erythrose 4-phosphate + beta-D-fructose 6-phosphate. The protein operates within carbohydrate degradation; pentose phosphate pathway; D-glyceraldehyde 3-phosphate and beta-D-fructose 6-phosphate from D-ribose 5-phosphate and D-xylulose 5-phosphate (non-oxidative stage): step 2/3. Transaldolase is important for the balance of metabolites in the pentose-phosphate pathway. The polypeptide is Transaldolase (Synechococcus sp. (strain ATCC 27144 / PCC 6301 / SAUG 1402/1) (Anacystis nidulans)).